The following is a 122-amino-acid chain: Cytochrome c-556 (122 aa).

Residues Met-11, Cys-111, Cys-114, and His-115 each contribute to the heme site. Residues Met-11, Cys-111, Cys-114, and His-115 each contribute to the heme c site.

As to quaternary structure, monomer. In terms of processing, binds 1 heme c group covalently per subunit.

In terms of biological role, low-spin monoheme cytochrome c. This chain is Cytochrome c-556, found in Agrobacterium tumefaciens (strain II Chrys).